We begin with the raw amino-acid sequence, 396 residues long: Elongation factor Tu (396 aa).

In terms of domain architecture, tr-type G spans 10-206 (KPHINVGTIG…ALDSYIPEPQ (197 aa)). Positions 19 to 26 (GHVDHGKT) are G1. Position 19 to 26 (19 to 26 (GHVDHGKT)) interacts with GTP. Position 26 (T26) interacts with Mg(2+). A G2 region spans residues 60 to 64 (GITIN). Positions 81–84 (DCPG) are G3. Residues 81-85 (DCPGH) and 136-139 (NKAD) each bind GTP. Residues 136–139 (NKAD) are G4. Positions 174-176 (SAL) are G5.

The protein belongs to the TRAFAC class translation factor GTPase superfamily. Classic translation factor GTPase family. EF-Tu/EF-1A subfamily. Monomer.

It localises to the cytoplasm. It carries out the reaction GTP + H2O = GDP + phosphate + H(+). Its function is as follows. GTP hydrolase that promotes the GTP-dependent binding of aminoacyl-tRNA to the A-site of ribosomes during protein biosynthesis. The sequence is that of Elongation factor Tu from Nitrosospira multiformis (strain ATCC 25196 / NCIMB 11849 / C 71).